Reading from the N-terminus, the 660-residue chain is MSSICKGDNSDLTEERKNATFDTDKMAAVIYGREEIASRRRQLTESISRIHELAESKPLVFMTREEKIAESCRKLEVLSRHWNQTPFNRDNEEDALHIYREVLGMEGHPLALHDTMFIPTLVAQASQEQQEKWLGRARRKEIIGCYAQTEMGHGTNLRKLETTATYSPDTQEFILNTPTITALKWWPGALGKSSNNAIVVANLLIKDQNYGPHPFMVQLRDEKTHIPLKGIVVGDIGPKMAFNGADNGYLGFNNHRIPRTNLLMRHTKVEANGTYIKPSHAKIGYSSMVKVRSRMAMDQGLFLASALVIAVRYSAVRRQGFLEDKTQKVKVLDYQTQQHRLFPSLARAYAFIFTGFETIHLYSQLLKDVDMGNTSGMADLHALTSGLKSVVTHQTGEGIEQARMACGEHGYSMASYISEIYGVAIGGCTYEGENMVMLLQLARYLVKSVELIKSGEEKKLGPMVSYLAAKGGHPDLSSLNGYVTAFEHMARRQAWKATEKFLKLMETGESREVAWNKSAVELTRASRLHTRLFIIEAFMRRVSRIEDIPVKEVLTDLLHLHVNYELLDVATYALEFMSSTQLDYIRDQLYLYLEKIRPSAVSLVDSFQISDMQLRSVLGRRDGNVYENLFKWAKSSPLNKSDVLPSVDKYLKPMMEKAKL.

Residues Y146 to T149, G154 to T155, and G188 contribute to the FAD site. Substrate is bound by residues K282–Y285 and R292. FAD contacts are provided by residues R317 and Q337–R340. H339, S389, H393, and Q401 together coordinate ATP. Residue Y430 to E431 coordinates substrate. The active-site Proton acceptor is E431. An FAD-binding site is contributed by E433. ATP is bound by residues R524–R527 and Y572. A Microbody targeting signal motif is present at residues A658 to L660.

It belongs to the acyl-CoA oxidase family. Forms a heterodimer with acox-1.1; the interaction may be important for the stability of acox-1.3. Requires FAD as cofactor.

It is found in the peroxisome. It carries out the reaction asc-C7-CoA + O2 = asc-DeltaC7-CoA + H2O2. Its pathway is lipid metabolism; peroxisomal fatty acid beta-oxidation. Activated by ATP. ATP binding leads to a conformational change that promotes FAD cofactor binding and enzyme activity. ATP binding likely occurs during acox-1.3 folding and/or dimer formation. In terms of biological role, involved in the first step of peroxisomal beta-oxidation by catalyzing the desaturation of fatty acid-derived side chains of ascaroside pheromones, which regulates development and behavior. Specifically, shortens ascarosides with a 7-carbon side chain (asc-C7). Does not catalyze the desaturation of fatty acids or hydroxylated fatty acids. Involved in the biosynthesis of asc-C6-MK (daumone 2) and asc-delta-C9 (daumone 3) but not asc-C7 (daumone 1); daumones are pheromones produced during unfavourable growth conditions which promote entry into the dauer stage. This Caenorhabditis elegans protein is Acyl-coenzyme A oxidase acox-1.3.